The sequence spans 296 residues: MEQFRNIGIIGRLGSVQVLDTVRRLKRFLLDRHLHVILEETIAEVLPGHGLQTSSRKMLGEVCDMVIVVGGDGSLLGAARALARHNVPVLGINRGSLGFLTDIRPDELEVKCAEVLDGHYLVENRFLLQAEVRRHGEAIGQGDALNDVVLHPGKSTRMIEFEIYIDGQFVCSQKADGLIVATPTGSTAYALSAGGPIMHPKLDAIVIVPMYPHTLSGRPIVVDGNSELKIVVSKDMTIYPQVSCDGQNHFTCAPGDTITVSKKPQKLRLIHPLDHNYYEVCRTKLGWGSRLGGGGD.

The Proton acceptor role is filled by D72. NAD(+) contacts are provided by residues 72–73 (DG), 146–147 (ND), R157, K174, D176, 187–192 (TAYALS), and Q247.

The protein belongs to the NAD kinase family. Requires a divalent metal cation as cofactor.

It localises to the cytoplasm. The catalysed reaction is NAD(+) + ATP = ADP + NADP(+) + H(+). Involved in the regulation of the intracellular balance of NAD and NADP, and is a key enzyme in the biosynthesis of NADP. Catalyzes specifically the phosphorylation on 2'-hydroxyl of the adenosine moiety of NAD to yield NADP. The protein is NAD kinase of Pseudomonas syringae pv. tomato (strain ATCC BAA-871 / DC3000).